A 1171-amino-acid chain; its full sequence is MSLRFVIGRAGSGKSTLCLHEVQEELKQRPRGETILYLVPEQMTFQTQQALIGSEDVRGSIRAQVFSFSRLAWKVLQEVGGASRLHIDEAGVHMLLRKIVESRKDGLSVFQKAAEQNGFFEHLGSMIAEFKRYNVTPSNVYEMWQQLDAHSSSAEQKLLANKVYDLQLLYDDFERALIGKYLDSEDYLQLLVENLPQSEYVKGAEVYIDGFHSFSPQELEIVRQLMICGARVTITLTIDEKTLAQPVNELDLFYETTLTYEKIKQVAREEKIEIEKTIPLMEQPRFHSPALAHLEMHYEARPNEKFHGEASVTIHTAANLRAEVEGVAREIRRLVAEENYRYRDIAVLLRNGESYYDVMRTLFTDYNIPHFIDEKRPMSHHPLVECIRSALEIISGNWRYDAVFRCVKTELLYPLDVRKETMREEMDEFENYCLAYGVQGKRWTSEDPWMYRRYRSLDDTNGMITDSEREMEEKINRLRDVVRTPVIRMQKRLKRAGTVMQMCEAVYLFLEELDVPKKLEALRIRAEESGDFLFATDHEQVWEEVMSLLDTFVEMLGEEKMSLSMFTDVMSTGLEALQFANIPPSLDQVLIANIDRSRLSNVKATFVIGVNEGVIPAAPMDEGMLSDEERDVLSAAGIELAPTTRQTLLEEQFVMYQMVTRATEKLYISCPLADEEGKTLLASSFIKKIKRMFPNVKDTFITNDVNDLSRSEQISYVATPEVTLSYVMQQLQTWKRYGFEGNLDFWWDVYNFYVTSDEWKQKSSRVLSSLFYRNRAQKLSTAVSRDLYGDKIKGSVSRMELFNRCAYAHFAQHGLSLRERDIFKLDAPDIGELFHAALKRIADRLLRENRTWADLSIKECEHLSTVVIEEIAPLLQRQILLSSNRHFYLKQKLQQIIFRTSIILREHAKSSGFVPVDLEVPFGMGGTGSLPPMEFSLPNGVKMEVVGRIDRVDKAEDENGTFLRIIDYKSSSKSLDLTEVYYGLALQMLTYLDVVTSNAQTWMKKGHAASPAGVLYFHIHNPIVEVKGDASEAEIEKEILKKFKMKGLVLGDADVVRLMDNKLSTGSSDIISAGLKKDGSFSARSSIASEQEFNVLQKYVHHTFKNIGKDITEGVIDIAPYKKGNKAACTFCNFKSVCQFDESLEDNQFRTLKDMKDSEAMEKIREEVGGE.

A UvrD-like helicase ATP-binding domain is found at Met-1–Arg-343. Gly-8–Ser-15 contributes to the ATP binding site. The UvrD-like helicase C-terminal domain occupies Met-281 to Asp-587. 4 residues coordinate [4Fe-4S] cluster: Cys-805, Cys-1129, Cys-1132, and Cys-1138.

The protein belongs to the helicase family. AddB/RexB type 1 subfamily. Heterodimer of AddA and AddB. Requires Mg(2+) as cofactor. It depends on [4Fe-4S] cluster as a cofactor.

The heterodimer acts as both an ATP-dependent DNA helicase and an ATP-dependent, dual-direction single-stranded exonuclease. Recognizes the chi site generating a DNA molecule suitable for the initiation of homologous recombination. The AddB subunit has 5' -&gt; 3' nuclease activity but not helicase activity. The sequence is that of ATP-dependent helicase/deoxyribonuclease subunit B from Bacillus thuringiensis (strain Al Hakam).